The chain runs to 371 residues: Cytokine receptor-like factor 2 (371 aa).

Positions 1-22 are cleaved as a signal peptide; the sequence is MGRLVLLWGAAVFLLGGWMALG. Topologically, residues 23–231 are extracellular; sequence QGGAAEGVQI…PTPPKPKLSK (209 aa). Asn-47 and Asn-55 each carry an N-linked (GlcNAc...) asparagine glycan. Cys-71 and Cys-84 are oxidised to a cystine. 2 N-linked (GlcNAc...) asparagine glycosylation sites follow: Asn-101 and Asn-169. The 94-residue stretch at 118–211 folds into the Fibronectin type-III domain; the sequence is KPSSPKHVRF…DWSEVTCWQR (94 aa). A disulfide bridge links Cys-180 with Cys-218. The WSXWS motif signature appears at 200–204; that stretch reads PSDWS. The helical transmembrane segment at 232–252 threads the bilayer; that stretch reads FILISSLAILLMVSLLLLSLW. Over 253–371 the chain is Cytoplasmic; that stretch reads KLWRVKKFLI…VMNDRSYVAL (119 aa). Positions 261-269 match the Box 1 motif motif; that stretch reads LIPSVPDPK. A compositionally biased stretch (basic and acidic residues) spans 322–336; sequence ESPRMLDPQTEEKEA. A disordered region spans residues 322-347; the sequence is ESPRMLDPQTEEKEASGGSLQLPHQP.

This sequence belongs to the type I cytokine receptor family. Type 5 subfamily. As to quaternary structure, heterodimer of CRLF2 and IL7R. Expressed in heart, skeletal muscle, kidney and adult and fetal liver. Primarily expressed in dendrites and monocytes. Weakly expressed in T-cells.

The protein resides in the cell membrane. The protein localises to the secreted. In terms of biological role, receptor for thymic stromal lymphopoietin (TSLP). Forms a functional complex with TSLP and IL7R which is capable of stimulating cell proliferation through activation of STAT3 and STAT5. Also activates JAK2. Implicated in the development of the hematopoietic system. The polypeptide is Cytokine receptor-like factor 2 (CRLF2) (Homo sapiens (Human)).